Here is a 288-residue protein sequence, read N- to C-terminus: Bis(5'-nucleosyl)-tetraphosphatase, symmetrical (288 aa).

It belongs to the Ap4A hydrolase family.

The catalysed reaction is P(1),P(4)-bis(5'-adenosyl) tetraphosphate + H2O = 2 ADP + 2 H(+). Hydrolyzes diadenosine 5',5'''-P1,P4-tetraphosphate to yield ADP. This chain is Bis(5'-nucleosyl)-tetraphosphatase, symmetrical, found in Pseudomonas putida (strain ATCC 700007 / DSM 6899 / JCM 31910 / BCRC 17059 / LMG 24140 / F1).